A 486-amino-acid polypeptide reads, in one-letter code: Cytochrome P450 monooxygenase aclC (486 aa).

Cysteine 427 provides a ligand contact to heme.

Belongs to the cytochrome P450 family. Heme serves as cofactor.

Its pathway is mycotoxin biosynthesis. Functionally, cytochrome P450 monooxygenase; part of the gene cluster that mediates the biosynthesis of aspirochlorine (or antibiotic A30641), an unusual halogenated spiro compound with distinctive antifungal properties due to selective inhibition of protein biosynthesis, and which is also active against bacteria, viruses, and murine tumor cells. The non-ribosomal peptide synthetase (NRPS) aclP is responsible the formation of the diketopiperazine (DKP) core from the condensation of 2 phenylalanine residues. One Phe residue is tailored into chlorotyrosine by hydroxylation and chlorination, whereas the second Phe undergoes an unprecedented C-C bond cleavage to be converted into glycine. After formation of the DKP, sulfur is incorporated into the DKP by conjugation with glutathione by aclG, followed by its stepwise degradation to the thiol by aclI, aclJ and aclK, and the dithiol oxidation by aclT. In addition, oxygenases (aclB, aclC, aclL and aclO) and O-methyltransferases (aclM and aclU) act as tailoring enzymes to produce the intermediate dechloroaspirochlorine. Ultimately, chlorination of dechloroaspirochlorine by the halogenase aclH is the last step in the aspirochlorine pathway. The chain is Cytochrome P450 monooxygenase aclC from Aspergillus oryzae (strain ATCC 42149 / RIB 40) (Yellow koji mold).